Consider the following 336-residue polypeptide: Type II methyltransferase M.PvuII (336 aa).

2 tandem repeats follow at residues 11-113 and 181-293. The tract at residues 196-215 is disordered; that stretch reads TPKTRPSGHDIGKSFSKDNG. Over residues 202 to 211 the composition is skewed to basic and acidic residues; the sequence is SGHDIGKSFS.

This sequence belongs to the N(4)/N(6)-methyltransferase family. N(4) subfamily. As to quaternary structure, monomer.

The catalysed reaction is a 2'-deoxycytidine in DNA + S-adenosyl-L-methionine = an N(4)-methyl-2'-deoxycytidine in DNA + S-adenosyl-L-homocysteine + H(+). In terms of biological role, a beta subtype methylase, recognizes the double-stranded sequence 5'-CAGCTG-3', methylates C-4 on both strands, and protects the DNA from cleavage by the PvuII endonuclease. This Proteus hauseri protein is Type II methyltransferase M.PvuII.